The primary structure comprises 334 residues: Large ribosomal subunit protein uL3 (334 aa).

A compositionally biased stretch (basic residues) spans 1 to 10; the sequence is MGMKKNRPRR. The interval 1–21 is disordered; that stretch reads MGMKKNRPRRGSLAFSPRKRA.

This sequence belongs to the universal ribosomal protein uL3 family. As to quaternary structure, part of the 50S ribosomal subunit. Forms a cluster with proteins L14 and L24e.

One of the primary rRNA binding proteins, it binds directly near the 3'-end of the 23S rRNA, where it nucleates assembly of the 50S subunit. The chain is Large ribosomal subunit protein uL3 from Methanococcus maripaludis (strain C5 / ATCC BAA-1333).